A 257-amino-acid polypeptide reads, in one-letter code: Probable transcriptional regulatory protein SRU_2667 (257 aa).

Residues 1–15 show a composition bias toward basic residues; it reads MAGHTRKWAKVKRKK. Residues 1-25 are disordered; it reads MAGHTRKWAKVKRKKQKDDRRKSKV.

It belongs to the TACO1 family.

Its subcellular location is the cytoplasm. This is Probable transcriptional regulatory protein SRU_2667 from Salinibacter ruber (strain DSM 13855 / M31).